The following is a 200-amino-acid chain: Phospholipase A2 inhibitor 1 (200 aa).

An N-terminal signal peptide occupies residues 1-19; sequence MKSLHIICLLFIFVARGNS. Intrachain disulfides connect cysteine 22-cysteine 46, cysteine 25-cysteine 32, cysteine 39-cysteine 67, cysteine 73-cysteine 94, cysteine 95-cysteine 100, cysteine 118-cysteine 143, cysteine 136-cysteine 165, and cysteine 169-cysteine 191. N-linked (GlcNAc...) asparagine glycosylation occurs at asparagine 176.

It belongs to the CNF-like-inhibitor family. As to quaternary structure, occurs as a mixture of oligomers. Tetrameric arrangement appears to be the predominant quaternary structure. N-glycosylated. Expressed by the liver.

It is found in the secreted. Its function is as follows. Inhibits basic phospholipase A2 isozymes PLA-B, BP-I and BP-II. The chain is Phospholipase A2 inhibitor 1 from Protobothrops flavoviridis (Habu).